A 203-amino-acid chain; its full sequence is Dephospho-CoA kinase (203 aa).

One can recognise a DPCK domain in the interval 6–203 (KVAITGGLSC…ELYQELKIYI (198 aa)). 14–19 (SCGKSS) provides a ligand contact to ATP.

It belongs to the CoaE family.

Its subcellular location is the cytoplasm. The enzyme catalyses 3'-dephospho-CoA + ATP = ADP + CoA + H(+). It functions in the pathway cofactor biosynthesis; coenzyme A biosynthesis; CoA from (R)-pantothenate: step 5/5. In terms of biological role, catalyzes the phosphorylation of the 3'-hydroxyl group of dephosphocoenzyme A to form coenzyme A. In Protochlamydia amoebophila (strain UWE25), this protein is Dephospho-CoA kinase.